We begin with the raw amino-acid sequence, 814 residues long: Plakophilin-2 (814 aa).

A required for binding to single-stranded DNA region spans residues 1-329; it reads MAIPGSLGEC…MTLERAVNML (329 aa). Ser44 carries the phosphoserine modification. Arg46 carries the post-translational modification Omega-N-methylarginine. 2 positions are modified to phosphoserine: Ser82 and Ser130. 8 ARM repeats span residues 200 to 240, 309 to 352, 354 to 393, 503 to 549, 604 to 644, 652 to 691, 696 to 737, and 740 to 782; these read TCQH…SIKG, CDCL…ESFQ, SEARKRVNQLQGIPKLLQLLKVQNEDVQRAVCGALRNLVF, PDGR…NLSY, PRGI…NLTA, SVARMVVQKENGLQHTRKMLHVGDPSVKKTAVSLLRNLSR, QNEI…NLMQ, and YQNA…SLWA.

Belongs to the beta-catenin family. As to quaternary structure, interacts with DSC2. Interacts with JUP. Interacts with KRT5/CK5, KRT8/CK8, KRT14/CK14, KRT18/CK18 and VIM. Interacts (via N-terminus) with MARK3/C-TAK1. Interacts with DSP. Interacts with DSG1, DSG2 and DSG3. Interacts (via N-terminus) with CTNNB1. Interacts with CDH1. Interacts with the RNA polymerase III (Pol III) complex proteins POLR3A/RPC155, POLR3F/RPC39 and POLR3C/RPC82. Interacts with CTNNA3. Interacts (via N-terminus) with SCN5A/Nav1.5. Interacts with ANK3/ANKG and GJA1/CX43. Expressed in the heart (at protein level).

The protein resides in the nucleus. It is found in the cell junction. Its subcellular location is the desmosome. It localises to the cytoplasm. In terms of biological role, a component of desmosome cell-cell junctions which are required for positive regulation of cellular adhesion. Regulates focal adhesion turnover resulting in changes in focal adhesion size, cell adhesion and cell spreading, potentially via transcriptional modulation of beta-integrins. Required to maintain gingival epithelial barrier function. Important component of the desmosome that is also required for localization of desmosome component proteins such as DSC2, DSG2 and JUP to the desmosome cell-cell junction. Required for the formation of desmosome cell junctions in cardiomyocytes, thereby required for the correct formation of the heart, specifically trabeculation and formation of the atria walls. Loss of desmosome cell junctions leads to mis-localization of DSP and DSG2 resulting in disruption of cell-cell adhesion and disordered intermediate filaments. Modulates profibrotic gene expression in cardiomyocytes via regulation of DSP expression and subsequent activation of downstream TGFB1 and MAPK14/p38 MAPK signaling. Required for cardiac sodium current propagation and electrical synchrony in cardiac myocytes, via ANK3 stabilization and modulation of SCN5A/Nav1.5 localization to cell-cell junctions. Required for mitochondrial function, nuclear envelope integrity and positive regulation of SIRT3 transcription via maintaining DES localization at its nuclear envelope and cell tip anchoring points, and thereby preserving regulation of the transcriptional program. Maintenance of nuclear envelope integrity protects against DNA damage and transcriptional dysregulation of genes, especially those involved in the electron transport chain, thereby preserving mitochondrial function and protecting against superoxide radical anion generation. Binds single-stranded DNA (ssDNA). May regulate the localization of GJA1 to gap junctions in intercalated disks of the heart. The sequence is that of Plakophilin-2 from Rattus norvegicus (Rat).